The chain runs to 283 residues: Tumor necrosis factor receptor superfamily member 14 (283 aa).

The N-terminal stretch at methionine 1 to alanine 38 is a signal peptide. Over leucine 39–valine 202 the chain is Extracellular. Disulfide bonds link cysteine 42–cysteine 53, cysteine 54–cysteine 67, cysteine 57–cysteine 75, cysteine 78–cysteine 93, cysteine 96–cysteine 111, cysteine 99–cysteine 119, cysteine 121–cysteine 138, and cysteine 127–cysteine 135. 3 TNFR-Cys repeats span residues cysteine 42–cysteine 75, cysteine 78–cysteine 119, and cysteine 121–cysteine 162. Residue asparagine 110 is glycosylated (N-linked (GlcNAc...) asparagine). A glycan (N-linked (GlcNAc...) asparagine) is linked at asparagine 173. The helical transmembrane segment at tryptophan 203 to isoleucine 223 threads the bilayer. Residues cysteine 224–histidine 283 lie on the Cytoplasmic side of the membrane. Phosphoserine is present on serine 240.

It belongs to the tumor necrosis factor receptor superfamily. Interacts with TRAF2, TRAF3 and TRAF5. Interacts (via CRD1/TNFR-Cys 1) with CD160; this interaction is direct. Interacts with LTA and TNFSF14. Interacts (via CRD1/TNFR-Cys 1) in cis and trans with BTLA; the cis interactions inhibits the trans interactions. In terms of assembly, (Microbial infection) Interacts with herpes simplex virus 1/HHV-1 envelope glycoprotein D. As to quaternary structure, (Microbial infection) Interacts with herpes simplex virus 2/HHV-2 envelope glycoprotein D. Post-translationally, N-glycosylated. As to expression, widely expressed, with the highest expression in lung, spleen and thymus. Expressed in a subpopulation of B cells and monocytes. Expressed in naive T cells.

Its subcellular location is the cell membrane. Its function is as follows. Receptor for four distinct ligands: The TNF superfamily members TNFSF14/LIGHT and homotrimeric LTA/lymphotoxin-alpha and the immunoglobulin superfamily members BTLA and CD160, altogether defining a complex stimulatory and inhibitory signaling network. Signals via the TRAF2-TRAF3 E3 ligase pathway to promote immune cell survival and differentiation. Participates in bidirectional cell-cell contact signaling between antigen presenting cells and lymphocytes. In response to ligation of TNFSF14/LIGHT, delivers costimulatory signals to T cells, promoting cell proliferation and effector functions. Interacts with CD160 on NK cells, enhancing IFNG production and anti-tumor immune response. In the context of bacterial infection, acts as a signaling receptor on epithelial cells for CD160 from intraepithelial lymphocytes, triggering the production of antimicrobial proteins and pro-inflammatory cytokines. Upon binding to CD160 on activated CD4+ T cells, down-regulates CD28 costimulatory signaling, restricting memory and alloantigen-specific immune response. May interact in cis (on the same cell) or in trans (on other cells) with BTLA. In cis interactions, appears to play an immune regulatory role inhibiting in trans interactions in naive T cells to maintain a resting state. In trans interactions, can predominate during adaptive immune response to provide survival signals to effector T cells. (Microbial infection) Acts as a receptor for Herpes simplex virus 1/HHV-1. In terms of biological role, (Microbial infection) Acts as a receptor for Herpes simplex virus 2/HHV-2. The protein is Tumor necrosis factor receptor superfamily member 14 of Homo sapiens (Human).